A 232-amino-acid polypeptide reads, in one-letter code: H-2 class II histocompatibility antigen, E-S beta chain (232 aa).

The segment at 1 to 90 (WFLEYSTSEC…LDKFLVPRRV (90 aa)) is beta-1. The Extracellular segment spans residues 1-193 (WFLEYSTSEC…KAQSTSAQNK (193 aa)). 2 disulfide bridges follow: Cys-10–Cys-74 and Cys-112–Cys-168. Residue Asn-14 is glycosylated (N-linked (GlcNAc...) asparagine). Positions 91–193 (EPTVTVYPTK…KAQSTSAQNK (103 aa)) are beta-2. An Ig-like C1-type domain is found at 92–182 (PTVTVYPTKT…PSLTDPVTVE (91 aa)). Residues 194-216 (MLSGVGGFVLGLLFLGAGLFIYF) form a helical membrane-spanning segment. Over 217–232 (RNQKGQSGLQPTGLLS) the chain is Cytoplasmic.

This sequence belongs to the MHC class II family. Post-translationally, ubiquitinated in immature dendritic cells leading to down-regulation of MHC class II.

The protein localises to the membrane. The polypeptide is H-2 class II histocompatibility antigen, E-S beta chain (H2-Eb1) (Mus musculus (Mouse)).